The following is a 442-amino-acid chain: F-box/FBD/LRR-repeat protein At3g14710 (442 aa).

The 48-residue stretch at 26–73 folds into the F-box domain; the sequence is DKFSSLLESVVSIILSQLPTAEAVSTSVLSKSWKNIWTNITDLHFDDT. LRR repeat units follow at residues 126–147, 151–172, and 173–194; these read NLQR…SLFP, SLVE…AILP, and NLKF…SKNL. The region spanning 370 to 414 is the FBD domain; that stretch reads VESPDCVTTMLKVLQIRNFKPNRLQISVLRYVLDNAEILGSVILS.

The sequence is that of F-box/FBD/LRR-repeat protein At3g14710 from Arabidopsis thaliana (Mouse-ear cress).